Reading from the N-terminus, the 291-residue chain is MAGSLSEIKAKIISTEKTSKITSAMRMVSSAKLVRSEQAARDFQIYASKIRQITTDLLKSELTIGSDNPMLVSRPVKKTGYIVITSDKGLVGGYNSKILKSVMDMITEYHADGDYEIISIGSVGSDFFKARGMNVAFELRGLADQPSFEQVRQIISQSVDMFVNEIFDELYVCYNHHVNSLTSQVRVQQMLPISDLVADEAAEEGVTGFELEPNRHDILDQLLPQFTESLIYGAIIDAKTAEHAAGMTAMQTATDNAKNVINDLTIQYNRARQAAITQEITEIVAGANALE.

The protein belongs to the ATPase gamma chain family. In terms of assembly, F-type ATPases have 2 components, CF(1) - the catalytic core - and CF(0) - the membrane proton channel. CF(1) has five subunits: alpha(3), beta(3), gamma(1), delta(1), epsilon(1). CF(0) has three main subunits: a, b and c.

The protein localises to the cell membrane. Its function is as follows. Produces ATP from ADP in the presence of a proton gradient across the membrane. The gamma chain is believed to be important in regulating ATPase activity and the flow of protons through the CF(0) complex. The polypeptide is ATP synthase gamma chain (Streptococcus pyogenes serotype M3 (strain ATCC BAA-595 / MGAS315)).